The sequence spans 352 residues: Threonine synthase (352 aa).

At K59 the chain carries N6-(pyridoxal phosphate)lysine. Pyridoxal 5'-phosphate is bound by residues N85, 185-189 (GNAGN), and T314.

The protein belongs to the threonine synthase family. It depends on pyridoxal 5'-phosphate as a cofactor.

It carries out the reaction O-phospho-L-homoserine + H2O = L-threonine + phosphate. It participates in amino-acid biosynthesis; L-threonine biosynthesis; L-threonine from L-aspartate: step 5/5. Catalyzes the gamma-elimination of phosphate from L-phosphohomoserine and the beta-addition of water to produce L-threonine. The polypeptide is Threonine synthase (thrC) (Bacillus sp. (strain ULM1)).